The chain runs to 205 residues: Small ribosomal subunit protein uS4 (205 aa).

Residues 1-16 (MSKRESSKYKIDRRMG) show a composition bias toward basic and acidic residues. The tract at residues 1-46 (MSKRESSKYKIDRRMGENIWGRPKSPVNRREYGPGQHGQRRKGKLS) is disordered. An S4 RNA-binding domain is found at 94-157 (SRLDAIVYRA…KQLVIVLESV (64 aa)).

Belongs to the universal ribosomal protein uS4 family. As to quaternary structure, part of the 30S ribosomal subunit. Contacts protein S5. The interaction surface between S4 and S5 is involved in control of translational fidelity.

One of the primary rRNA binding proteins, it binds directly to 16S rRNA where it nucleates assembly of the body of the 30S subunit. In terms of biological role, with S5 and S12 plays an important role in translational accuracy. This Rhizobium rhizogenes (strain K84 / ATCC BAA-868) (Agrobacterium radiobacter) protein is Small ribosomal subunit protein uS4.